A 291-amino-acid chain; its full sequence is MPELPEVETVRRGLQPAMEGFRIDRAVAHRENLRFPLQKDFAARLTGQTVTGLGRRAKYLLADLSSGDVLLMHLGMSGSFRVIGADGETTPGEFHYPRSEDRTHDHVVFEMASGARVVFNDPRRFGFMKVFPRSEIETEPHLKGLGPEPLGNAFDASLLAKACAGKQTSLKAALLDQRVVAGLGNIYVCEALFRAHLSPKRKASTLANRKEEPTDHAVRLTEAIREVLGEAIKAGGSSLRDHRQTSGELGYFQHAFKVYDREGKPCPTCGGTVQRFVQNGRSTFWCPKCQK.

The Schiff-base intermediate with DNA role is filled by Pro-2. Catalysis depends on Glu-3, which acts as the Proton donor. The Proton donor; for beta-elimination activity role is filled by Lys-58. Residues His-104, Arg-123, and Lys-166 each contribute to the DNA site. The FPG-type zinc-finger motif lies at 257–291; it reads KVYDREGKPCPTCGGTVQRFVQNGRSTFWCPKCQK. Arg-281 acts as the Proton donor; for delta-elimination activity in catalysis.

It belongs to the FPG family. As to quaternary structure, monomer. Requires Zn(2+) as cofactor.

It carries out the reaction Hydrolysis of DNA containing ring-opened 7-methylguanine residues, releasing 2,6-diamino-4-hydroxy-5-(N-methyl)formamidopyrimidine.. It catalyses the reaction 2'-deoxyribonucleotide-(2'-deoxyribose 5'-phosphate)-2'-deoxyribonucleotide-DNA = a 3'-end 2'-deoxyribonucleotide-(2,3-dehydro-2,3-deoxyribose 5'-phosphate)-DNA + a 5'-end 5'-phospho-2'-deoxyribonucleoside-DNA + H(+). Its function is as follows. Involved in base excision repair of DNA damaged by oxidation or by mutagenic agents. Acts as a DNA glycosylase that recognizes and removes damaged bases. Has a preference for oxidized purines, such as 7,8-dihydro-8-oxoguanine (8-oxoG). Has AP (apurinic/apyrimidinic) lyase activity and introduces nicks in the DNA strand. Cleaves the DNA backbone by beta-delta elimination to generate a single-strand break at the site of the removed base with both 3'- and 5'-phosphates. In Rhodopseudomonas palustris (strain TIE-1), this protein is Formamidopyrimidine-DNA glycosylase.